The chain runs to 79 residues: Protein B6 (79 aa).

This Human herpesvirus 6B (strain Z29) (HHV-6 variant B) protein is Protein B6 (B6).